The chain runs to 163 residues: Superoxide dismutase [Mn] (163 aa).

Residues histidine 2, histidine 50, aspartate 134, and histidine 138 each coordinate Mn(2+).

It belongs to the iron/manganese superoxide dismutase family. It depends on Mn(2+) as a cofactor.

The catalysed reaction is 2 superoxide + 2 H(+) = H2O2 + O2. Destroys superoxide anion radicals which are normally produced within the cells and which are toxic to biological systems. This is Superoxide dismutase [Mn] (sodA) from Mycobacterium scrofulaceum.